The primary structure comprises 282 residues: UDP-3-O-acyl-N-acetylglucosamine deacetylase (282 aa).

Zn(2+)-binding residues include H81, H239, and D243. H266 (proton donor) is an active-site residue.

Belongs to the LpxC family. It depends on Zn(2+) as a cofactor.

The enzyme catalyses a UDP-3-O-[(3R)-3-hydroxyacyl]-N-acetyl-alpha-D-glucosamine + H2O = a UDP-3-O-[(3R)-3-hydroxyacyl]-alpha-D-glucosamine + acetate. The protein operates within glycolipid biosynthesis; lipid IV(A) biosynthesis; lipid IV(A) from (3R)-3-hydroxytetradecanoyl-[acyl-carrier-protein] and UDP-N-acetyl-alpha-D-glucosamine: step 2/6. Catalyzes the hydrolysis of UDP-3-O-myristoyl-N-acetylglucosamine to form UDP-3-O-myristoylglucosamine and acetate, the committed step in lipid A biosynthesis. The sequence is that of UDP-3-O-acyl-N-acetylglucosamine deacetylase from Chlamydia pneumoniae (Chlamydophila pneumoniae).